The following is a 144-amino-acid chain: Large ribosomal subunit protein uL16 (144 aa).

The span at 1-14 (MLMPKRVKYRKPHR) shows a compositional bias: basic residues. A disordered region spans residues 1 to 25 (MLMPKRVKYRKPHRPGTQGKATRGN).

The protein belongs to the universal ribosomal protein uL16 family. Part of the 50S ribosomal subunit.

Its function is as follows. Binds 23S rRNA and is also seen to make contacts with the A and possibly P site tRNAs. The sequence is that of Large ribosomal subunit protein uL16 from Moorella thermoacetica (strain ATCC 39073 / JCM 9320).